A 938-amino-acid polypeptide reads, in one-letter code: Isoleucine--tRNA ligase (938 aa).

The 'HIGH' region motif lies at 58 to 68 (PYANGSIHIGH). Lys183 carries the post-translational modification N6-acetyllysine. Glu561 is an L-isoleucyl-5'-AMP binding site. The 'KMSKS' region motif lies at 602 to 606 (KMSKS). Lys605 contacts ATP. Zn(2+)-binding residues include Cys901, Cys904, Cys921, and Cys924.

Belongs to the class-I aminoacyl-tRNA synthetase family. IleS type 1 subfamily. As to quaternary structure, monomer. Zn(2+) serves as cofactor.

Its subcellular location is the cytoplasm. The catalysed reaction is tRNA(Ile) + L-isoleucine + ATP = L-isoleucyl-tRNA(Ile) + AMP + diphosphate. Its function is as follows. Catalyzes the attachment of isoleucine to tRNA(Ile). As IleRS can inadvertently accommodate and process structurally similar amino acids such as valine, to avoid such errors it has two additional distinct tRNA(Ile)-dependent editing activities. One activity is designated as 'pretransfer' editing and involves the hydrolysis of activated Val-AMP. The other activity is designated 'posttransfer' editing and involves deacylation of mischarged Val-tRNA(Ile). The sequence is that of Isoleucine--tRNA ligase from Escherichia coli O6:K15:H31 (strain 536 / UPEC).